The primary structure comprises 318 residues: tRNA-modifying protein YgfZ (318 aa).

Positions 28 and 182 each coordinate folate.

The protein belongs to the tRNA-modifying YgfZ family.

The protein resides in the cytoplasm. In terms of biological role, folate-binding protein involved in regulating the level of ATP-DnaA and in the modification of some tRNAs. It is probably a key factor in regulatory networks that act via tRNA modification, such as initiation of chromosomal replication. In Aliivibrio fischeri (strain MJ11) (Vibrio fischeri), this protein is tRNA-modifying protein YgfZ.